A 170-amino-acid chain; its full sequence is Peptide deformylase 1 (170 aa).

Positions 91 and 133 each coordinate Fe cation. Glu-134 is an active-site residue. His-137 serves as a coordination point for Fe cation.

Belongs to the polypeptide deformylase family. The cofactor is Fe(2+).

It carries out the reaction N-terminal N-formyl-L-methionyl-[peptide] + H2O = N-terminal L-methionyl-[peptide] + formate. Removes the formyl group from the N-terminal Met of newly synthesized proteins. Requires at least a dipeptide for an efficient rate of reaction. N-terminal L-methionine is a prerequisite for activity but the enzyme has broad specificity at other positions. The chain is Peptide deformylase 1 from Vibrio vulnificus (strain CMCP6).